The chain runs to 801 residues: Cation/H(+) antiporter 28 (801 aa).

12 helical membrane-spanning segments follow: residues 24-44 (ALKI…HYLM), 77-97 (SITL…VMGL), 113-133 (FIAY…TPFL), 140-160 (PYIF…PILT), 179-199 (AAGV…FIFF), 216-236 (LLMF…SPIF), 252-272 (GSHL…PTWP), 275-292 (SMYN…FLPN), 304-324 (INYL…GFII), 343-363 (LLGT…LLLG), 371-391 (SLGL…ALAI), and 403-423 (LIIF…MDII).

It belongs to the monovalent cation:proton antiporter 2 (CPA2) transporter (TC 2.A.37) family. CHX (TC 2.A.37.4) subfamily. As to expression, specifically expressed in pollen.

Its subcellular location is the membrane. Its function is as follows. May operate as a cation/H(+) antiporter. This is Cation/H(+) antiporter 28 (CHX28) from Arabidopsis thaliana (Mouse-ear cress).